A 301-amino-acid polypeptide reads, in one-letter code: MSDAGGGKKPPVEPQAGPGPGRAAGERGLSGSFPLVLKKLMENPPRETRLDKEKGKEKLEEDESAAASTMAVSASLMPPIWDKTIPYDGESFHLEYMDLDEFLLENGIPASPTHLAQNLLLPVAELEGKESASSSTASPPSSSTAIFQPSETVSSTESSLEKERETPSPIDPSCVEVDVNFNPDPADLVLSSVPGGELFNPRKHRFAEEDLKPQPMIKKAKKVFVPDEQKDEKYWTRRKKNNVAAKRSRDARRLKENQITIRAAFLEKENTALRTEVAELRKEVGKCKTIVSKYETKYGPL.

2 disordered regions span residues 1–70 (MSDA…ASTM) and 130–174 (ESAS…DPSC). Ser30 is modified (phosphoserine). The span at 39–59 (KLMENPPRETRLDKEKGKEKL) shows a compositional bias: basic and acidic residues. Low complexity predominate over residues 131–158 (SASSSTASPPSSSTAIFQPSETVSSTES). The region spanning 231–294 (DEKYWTRRKK…GKCKTIVSKY (64 aa)) is the bZIP domain. A basic motif region spans residues 233–253 (KYWTRRKKNNVAAKRSRDARR). The tract at residues 254–261 (LKENQITI) is leucine-zipper.

It belongs to the bZIP family. PAR subfamily. In terms of assembly, binds DNA as a homodimer or a heterodimer. Can form a heterodimer with DBP. In terms of tissue distribution, isoform Alpha and isoform Beta are expressed at high levels in lung, bladder, kidney, gut and brain.

It localises to the nucleus. Transcription factor that binds to and transactivates the TSHB promoter. Binds to a minimal DNA-binding sequence 5'-[TC][AG][AG]TTA[TC][AG]-3'. Also activates the telokin promoter in smooth muscle-specific and calcium-dependent manner. This Mus musculus (Mouse) protein is Thyrotroph embryonic factor (Tef).